Here is a 461-residue protein sequence, read N- to C-terminus: pre-mRNA splicing regulator USH1G (461 aa).

ANK repeat units lie at residues 31–60, 64–93, and 97–126; these read DGMTPTLWAAYHGNLESLRLIVSRGGDPDK, WGNTPLHLAASNGHLHCLSFLVSFGANIWC, and DYHTPLDMAAMKGHMECVRYLDSIAAKQSS. 2 disordered regions span residues 208–243 and 332–368; these read GTARGKTKMQKKLERRKQGGEGTFKVSEDGRKSARS and EDGGLDGVGAPRGRLQSSPSLDDDSLGSANSLQDRSC. The span at 210 to 222 shows a compositional bias: basic residues; it reads ARGKTKMQKKLER. One can recognise an SAM domain in the interval 385 to 447; sequence LEPETSPLET…KILGAVRRRR (63 aa). The residue at position 422 (Ser-422) is a Phosphoserine; by CK2.

Part of a complex composed of USH1C, USH1G and MYO7A. Interacts with USH1C (via the first PDZ domain). Interacts with PDZD7. Interacts with CDH23 and PCDH15; these interactions may recruit USH1G to the plasma membrane. Interacts with intraflagellar transport proteins IFT20, IFT52 and IFT57. Interacts with splicing factors SF3B1, PRPF6, PRPF31 and SON. Interacts with the U4/U6.U5 tri-small nuclear ribonucleoprotein (tri-snRNP) complex in the presence of pre-mRNAs. Interacts (via SAM domain) with MAGI2 (via PDZ 6 domain); the interaction is triggered by phosphorylation of USH1G by CK2 and negatively regulates MAGI2-mediated endocytosis. In terms of tissue distribution, expressed in vestibule of the inner ear, eye and small intestine.

The protein localises to the cytoplasm. Its subcellular location is the cytosol. The protein resides in the cytoskeleton. It is found in the cell membrane. It localises to the cell projection. The protein localises to the cilium. Its subcellular location is the nucleus speckle. The protein resides in the nucleus. It is found in the cajal body. It localises to the microtubule organizing center. The protein localises to the centrosome. Its subcellular location is the photoreceptor inner segment. In terms of biological role, plays a role in pre-mRNA splicing by regulating the release and transfer of U4/U6.U5 tri-small nuclear ribonucleoprotein (tri-snRNP) complexes from their assembly site in Cajal bodies to nuclear speckles, thereby contributing to the assembly of the pre-catalytic spliceosome on target pre-mRNAs. May also participate in recycling of snRNPs back to Cajal bodies during splicing. Plays a role in regulating MAGI2-mediated endocytosis. Anchoring/scaffolding protein that is a part of the functional network formed by USH1C, USH1G, CDH23 and MYO7A that mediates mechanotransduction in cochlear hair cells. Required for normal development and maintenance of cochlear hair cell bundles. Required for normal hearing. The chain is pre-mRNA splicing regulator USH1G (USH1G) from Homo sapiens (Human).